Consider the following 142-residue polypeptide: Hemoglobin subunit zeta (142 aa).

Ser2 is subject to N-acetylserine. A Globin domain is found at 2–142; the sequence is SLTKTEGTII…VSSVLTEKYR (141 aa). A Phosphothreonine modification is found at Thr29. Ser53 bears the Phosphoserine mark. Residue His59 coordinates heme b. 2 positions are modified to phosphoserine: Ser73 and Ser82. His88 contacts heme b.

The protein belongs to the globin family. Heterotetramer of two zeta chains and beta-type chains.

The zeta chain is an alpha-type chain of mammalian embryonic hemoglobin. The chain is Hemoglobin subunit zeta (HBZ1) from Pan troglodytes (Chimpanzee).